An 802-amino-acid chain; its full sequence is Leucine--tRNA ligase (802 aa).

The short motif at 39–50 is the 'HIGH' region element; that stretch reads PYPSGAGLHVGH. The 'KMSKS' region motif lies at 574-578; the sequence is KMSKS. Residue Lys577 coordinates ATP.

It belongs to the class-I aminoacyl-tRNA synthetase family.

It localises to the cytoplasm. It catalyses the reaction tRNA(Leu) + L-leucine + ATP = L-leucyl-tRNA(Leu) + AMP + diphosphate. The chain is Leucine--tRNA ligase from Macrococcus caseolyticus (strain JCSC5402) (Macrococcoides caseolyticum).